The primary structure comprises 651 residues: Protein RcaC (651 aa).

The 115-residue stretch at 2 to 116 folds into the Response regulatory 1 domain; sequence KILLVEDDDV…ELIARIRALL (115 aa). Residue Asp-51 is modified to 4-aspartylphosphate. The segment at residues 124 to 223 is a DNA-binding region (ompR/PhoB-type); that stretch reads FPLLTWGDLL…MHGRGYYLKA (100 aa). Response regulatory domains follow at residues 384-519 and 527-643; these read LLLM…VNLL and KVMI…LRRL.

Functionally, required for chromatic adaptation. Thought to be a positive regulator of phycobiliproteins. This chain is Protein RcaC (rcaC), found in Microchaete diplosiphon (Fremyella diplosiphon).